Here is a 194-residue protein sequence, read N- to C-terminus: Oligoribonuclease (194 aa).

Positions 11-174 (LIWIDLEMTG…SDVRDSIDEL (164 aa)) constitute an Exonuclease domain. Tyr132 is a catalytic residue.

This sequence belongs to the oligoribonuclease family.

Its subcellular location is the cytoplasm. 3'-to-5' exoribonuclease specific for small oligoribonucleotides. This is Oligoribonuclease from Xanthomonas euvesicatoria pv. vesicatoria (strain 85-10) (Xanthomonas campestris pv. vesicatoria).